A 109-amino-acid polypeptide reads, in one-letter code: FAD assembly factor SdhE (109 aa).

Residues 1–22 (MQDNFTASSPSSSSSASGVAED) form a disordered region. The span at 7–17 (ASSPSSSSSAS) shows a compositional bias: low complexity.

The protein belongs to the SdhE FAD assembly factor family.

Its subcellular location is the cytoplasm. In terms of biological role, an FAD assembly protein, which accelerates covalent attachment of the cofactor into other proteins. Plays an essential role in the assembly of succinate dehydrogenase (SDH, respiratory complex II), an enzyme complex that is a component of both the tricarboxylic acid cycle and the electron transport chain, and which couples the oxidation of succinate to fumarate with the reduction of ubiquinone (coenzyme Q) to ubiquinol. Required for flavinylation of SdhA, when the SDH operon and this gene are overexpressed in G.oxydans. Flavinylation of SdhA is detected only in the presence of sdhE. The sequence is that of FAD assembly factor SdhE from Acetobacter pasteurianus (strain NBRC 105184 / IFO 3283-01).